A 313-amino-acid chain; its full sequence is Ribosomal RNA small subunit methyltransferase H (313 aa).

S-adenosyl-L-methionine contacts are provided by residues 35 to 37, D55, F80, D102, and Q109; that span reads GGH.

Belongs to the methyltransferase superfamily. RsmH family.

It is found in the cytoplasm. It catalyses the reaction cytidine(1402) in 16S rRNA + S-adenosyl-L-methionine = N(4)-methylcytidine(1402) in 16S rRNA + S-adenosyl-L-homocysteine + H(+). Functionally, specifically methylates the N4 position of cytidine in position 1402 (C1402) of 16S rRNA. This Shewanella denitrificans (strain OS217 / ATCC BAA-1090 / DSM 15013) protein is Ribosomal RNA small subunit methyltransferase H.